Reading from the N-terminus, the 177-residue chain is Large ribosomal subunit protein uL6 (177 aa).

Belongs to the universal ribosomal protein uL6 family. Part of the 50S ribosomal subunit.

Functionally, this protein binds to the 23S rRNA, and is important in its secondary structure. It is located near the subunit interface in the base of the L7/L12 stalk, and near the tRNA binding site of the peptidyltransferase center. The chain is Large ribosomal subunit protein uL6 from Methylibium petroleiphilum (strain ATCC BAA-1232 / LMG 22953 / PM1).